The following is a 651-amino-acid chain: Acetyl-coenzyme A synthetase (651 aa).

CoA contacts are provided by residues 189 to 192 (RGGK), T311, and N335. Residues 387 to 389 (GEP), 411 to 416 (DTWWQT), D500, and R515 contribute to the ATP site. S523 lines the CoA pocket. R526 is a binding site for ATP. Positions 537, 539, and 542 each coordinate Mg(2+). R586 contacts CoA. K611 is subject to N6-acetyllysine.

It belongs to the ATP-dependent AMP-binding enzyme family. Mg(2+) serves as cofactor. Post-translationally, acetylated. Deacetylation by the SIR2-homolog deacetylase activates the enzyme.

The enzyme catalyses acetate + ATP + CoA = acetyl-CoA + AMP + diphosphate. Functionally, catalyzes the conversion of acetate into acetyl-CoA (AcCoA), an essential intermediate at the junction of anabolic and catabolic pathways. AcsA undergoes a two-step reaction. In the first half reaction, AcsA combines acetate with ATP to form acetyl-adenylate (AcAMP) intermediate. In the second half reaction, it can then transfer the acetyl group from AcAMP to the sulfhydryl group of CoA, forming the product AcCoA. The chain is Acetyl-coenzyme A synthetase from Brucella anthropi (strain ATCC 49188 / DSM 6882 / CCUG 24695 / JCM 21032 / LMG 3331 / NBRC 15819 / NCTC 12168 / Alc 37) (Ochrobactrum anthropi).